Consider the following 216-residue polypeptide: Nucleoid occlusion factor SlmA (216 aa).

The segment at 1-23 (MAEQLTLDSIEPEPEKQSAKIEK) is disordered. The segment covering 13–23 (EPEKQSAKIEK) has biased composition (basic and acidic residues). An HTH tetR-type domain is found at 28-88 (ERRQQVLTVL…ALIENIESSL (61 aa)). Positions 51-70 (TTARLAKEVGVSEAALYRYF) form a DNA-binding region, H-T-H motif.

Belongs to the nucleoid occlusion factor SlmA family. Homodimer. Interacts with FtsZ.

It is found in the cytoplasm. The protein resides in the nucleoid. Its function is as follows. Required for nucleoid occlusion (NO) phenomenon, which prevents Z-ring formation and cell division over the nucleoid. Acts as a DNA-associated cell division inhibitor that binds simultaneously chromosomal DNA and FtsZ, and disrupts the assembly of FtsZ polymers. SlmA-DNA-binding sequences (SBS) are dispersed on non-Ter regions of the chromosome, preventing FtsZ polymerization at these regions. The sequence is that of Nucleoid occlusion factor SlmA from Mannheimia succiniciproducens (strain KCTC 0769BP / MBEL55E).